Here is a 458-residue protein sequence, read N- to C-terminus: Adenylosuccinate synthetase (458 aa).

GTP-binding positions include 17–23 (GDEGKGK) and 45–47 (GHT). Asp18 (proton acceptor) is an active-site residue. The Mg(2+) site is built by Asp18 and Gly45. Residues 18–21 (DEGK), 43–46 (NAGH), Thr137, Arg151, Gln247, Thr262, and Arg330 each bind IMP. His46 serves as the catalytic Proton donor. 326-332 (VTTGRSR) provides a ligand contact to substrate. GTP contacts are provided by residues Arg332, 358–360 (KLD), and 440–442 (STG).

It belongs to the adenylosuccinate synthetase family. In terms of assembly, homodimer. Requires Mg(2+) as cofactor.

It localises to the cytoplasm. It catalyses the reaction IMP + L-aspartate + GTP = N(6)-(1,2-dicarboxyethyl)-AMP + GDP + phosphate + 2 H(+). The protein operates within purine metabolism; AMP biosynthesis via de novo pathway; AMP from IMP: step 1/2. Its function is as follows. Plays an important role in the de novo pathway of purine nucleotide biosynthesis. Catalyzes the first committed step in the biosynthesis of AMP from IMP. This Albidiferax ferrireducens (strain ATCC BAA-621 / DSM 15236 / T118) (Rhodoferax ferrireducens) protein is Adenylosuccinate synthetase.